The chain runs to 144 residues: Large ribosomal subunit protein uL15 (144 aa).

Positions 1–57 are disordered; that stretch reads MLLNTLSPAAGSKHAPKRLGRGVGSGLGKTGGRGHKGQKSRSGGKVRPGFEGGQMPL. Gly residues predominate over residues 21–31; sequence RGVGSGLGKTG. A compositionally biased stretch (basic residues) spans 32 to 44; the sequence is GRGHKGQKSRSGG.

Belongs to the universal ribosomal protein uL15 family. As to quaternary structure, part of the 50S ribosomal subunit.

Binds to the 23S rRNA. The chain is Large ribosomal subunit protein uL15 from Vibrio cholerae serotype O1 (strain ATCC 39315 / El Tor Inaba N16961).